Here is a 91-residue protein sequence, read N- to C-terminus: MSVKIRMKRMGSKKRPFYRIVVADSRSPRDGRFIQQVGYYNPLTEPVDLKLEEEVIMDWLQKGAQPSDTVRNLLSKQGIMQKYHEARFAKK.

This sequence belongs to the bacterial ribosomal protein bS16 family.

This chain is Small ribosomal subunit protein bS16, found in Latilactobacillus sakei subsp. sakei (strain 23K) (Lactobacillus sakei subsp. sakei).